The sequence spans 521 residues: GMP synthase [glutamine-hydrolyzing] (521 aa).

The 199-residue stretch at 5-203 (KILILDFGSQ…VHEICGCGRD (199 aa)) folds into the Glutamine amidotransferase type-1 domain. Cys-82 functions as the Nucleophile in the catalytic mechanism. Residues His-177 and Glu-179 contribute to the active site. The GMPS ATP-PPase domain occupies 204–396 (WNMPDYVNEA…LGLPHEMVYR (193 aa)). ATP is bound at residue 231 to 237 (SGGVDSS).

In terms of assembly, homodimer.

It catalyses the reaction XMP + L-glutamine + ATP + H2O = GMP + L-glutamate + AMP + diphosphate + 2 H(+). It functions in the pathway purine metabolism; GMP biosynthesis; GMP from XMP (L-Gln route): step 1/1. Functionally, catalyzes the synthesis of GMP from XMP. This is GMP synthase [glutamine-hydrolyzing] from Aromatoleum aromaticum (strain DSM 19018 / LMG 30748 / EbN1) (Azoarcus sp. (strain EbN1)).